A 339-amino-acid polypeptide reads, in one-letter code: 2,3,4,5-tetrahydropyridine-2,6-dicarboxylate N-succinyltransferase (339 aa).

A Mg(2+)-binding site is contributed by Asp-180. Catalysis depends on Glu-213, which acts as the Acyl-anhydride intermediate. Succinyl-CoA is bound by residues Arg-215, Gly-230, Ser-233, Ala-256, 271-272 (EA), Gly-279, and Lys-300.

It belongs to the type 2 tetrahydrodipicolinate N-succinyltransferase family. In terms of assembly, homotrimer.

It localises to the cytoplasm. It carries out the reaction (S)-2,3,4,5-tetrahydrodipicolinate + succinyl-CoA + H2O = (S)-2-succinylamino-6-oxoheptanedioate + CoA. It functions in the pathway amino-acid biosynthesis; L-lysine biosynthesis via DAP pathway; LL-2,6-diaminopimelate from (S)-tetrahydrodipicolinate (succinylase route): step 1/3. Catalyzes the conversion of the cyclic tetrahydrodipicolinate (THDP) into the acyclic N-succinyl-L-2-amino-6-oxopimelate using succinyl-CoA. This Bifidobacterium longum (strain NCC 2705) protein is 2,3,4,5-tetrahydropyridine-2,6-dicarboxylate N-succinyltransferase.